The primary structure comprises 91 residues: Alpha-defensin 31 (91 aa).

The signal sequence occupies residues 1 to 19 (MKKLVLLFALVLLAFQVQA). A propeptide spanning residues 20-65 (DSIQNTDEETKTEEQQGEEDQAVSVSFGDPQGSGLQDAALGWGRRC) is cleaved from the precursor. Residues 22–55 (IQNTDEETKTEEQQGEEDQAVSVSFGDPQGSGLQ) form a disordered region. A run of 6 repeats spans residues 65–67 (CPR), 68–70 (CPP), 71–73 (CPR), 77–79 (CPR), 80–82 (CPT), and 83–85 (CPR). The tract at residues 65–85 (CPRCPPCPRCSWCPRCPTCPR) is 6 X 3 AA tandem repeats of C-P-X.

Belongs to the alpha-defensin family. As to expression, paneth cells of the small bowel.

The protein localises to the secreted. Functionally, apparent precursor of a secreted, cationic, proline- and cysteine-rich peptide that contains Cys-Pro-Xaa repeats. Unlike cryptdin, the proposed mature peptide region lacks the structural motif characteristic of defensins. It may have microbicidal activities. This is Alpha-defensin 31 from Mus musculus (Mouse).